Consider the following 614-residue polypeptide: 2-succinyl-5-enolpyruvyl-6-hydroxy-3-cyclohexene-1-carboxylate synthase (614 aa).

Belongs to the TPP enzyme family. MenD subfamily. In terms of assembly, homodimer. Requires Mg(2+) as cofactor. It depends on Mn(2+) as a cofactor. Thiamine diphosphate serves as cofactor.

The enzyme catalyses isochorismate + 2-oxoglutarate + H(+) = 5-enolpyruvoyl-6-hydroxy-2-succinyl-cyclohex-3-ene-1-carboxylate + CO2. It functions in the pathway quinol/quinone metabolism; 1,4-dihydroxy-2-naphthoate biosynthesis; 1,4-dihydroxy-2-naphthoate from chorismate: step 2/7. The protein operates within quinol/quinone metabolism; menaquinone biosynthesis. Catalyzes the thiamine diphosphate-dependent decarboxylation of 2-oxoglutarate and the subsequent addition of the resulting succinic semialdehyde-thiamine pyrophosphate anion to isochorismate to yield 2-succinyl-5-enolpyruvyl-6-hydroxy-3-cyclohexene-1-carboxylate (SEPHCHC). In Sorangium cellulosum (strain So ce56) (Polyangium cellulosum (strain So ce56)), this protein is 2-succinyl-5-enolpyruvyl-6-hydroxy-3-cyclohexene-1-carboxylate synthase.